Consider the following 439-residue polypeptide: Tol-Pal system protein TolB (439 aa).

The first 24 residues, 1–24 (MRNGMRKIIAGVFIFVFLISNLYA), serve as a signal peptide directing secretion.

This sequence belongs to the TolB family. In terms of assembly, the Tol-Pal system is composed of five core proteins: the inner membrane proteins TolA, TolQ and TolR, the periplasmic protein TolB and the outer membrane protein Pal. They form a network linking the inner and outer membranes and the peptidoglycan layer.

It localises to the periplasm. Part of the Tol-Pal system, which plays a role in outer membrane invagination during cell division and is important for maintaining outer membrane integrity. This chain is Tol-Pal system protein TolB, found in Francisella tularensis subsp. tularensis (strain FSC 198).